The primary structure comprises 452 residues: Probable multidrug resistance protein NorM (452 aa).

12 helical membrane passes run 14–34 (LLHI…ITFL), 56–76 (LWTP…PIVA), 97–117 (VAAL…DLIL), 129–149 (IAKH…VYTV), 164–184 (MMIT…FIFG), 195–215 (GAGL…FFII), 244–264 (IGLP…AVTL), 284–304 (ASLL…VVGF), 319–339 (LIGI…ILLF), 360–380 (FLIY…IQGA), 392–412 (AAAF…VGTF), and 417–437 (AFGY…GLFF).

The protein belongs to the multi antimicrobial extrusion (MATE) (TC 2.A.66.1) family.

The protein localises to the cell membrane. Its function is as follows. Multidrug efflux pump. The sequence is that of Probable multidrug resistance protein NorM (norM) from Bacillus subtilis (strain 168).